We begin with the raw amino-acid sequence, 103 residues long: c-Myc-binding protein (103 aa).

The protein belongs to the AMY1 family. In terms of assembly, binds via its C-terminal region to the N-terminal region of MYC. Associates with AKAP1/S-AKAP84. Interacts with MYCBPAP. Interacts with CFAP91.

Its subcellular location is the cytoplasm. The protein localises to the nucleus. May control the transcriptional activity of MYC. Stimulates the activation of E box-dependent transcription by MYC. The polypeptide is c-Myc-binding protein (Mycbp) (Mus musculus (Mouse)).